The sequence spans 397 residues: Ethanolaminephosphotransferase 1 (397 aa).

The residue at position 2 (alanine 2) is an N-acetylalanine. 10 helical membrane passes run 47-69, 84-103, 123-145, 150-172, 179-201, 221-243, 256-278, 291-310, 317-339, and 344-366; these read WLAP…LLMA, HVPD…AYTL, LFDH…SIFG, GVSV…LSHW, ILFL…IVTA, LFTA…LNFF, VYEA…AWIL, VFYF…LIVC, CPTL…LGVA, and SILL…VRVV. Selenocysteine 387 is a non-standard amino acid (selenocysteine).

Belongs to the CDP-alcohol phosphatidyltransferase class-I family. Mg(2+) serves as cofactor. Mn(2+) is required as a cofactor.

The protein localises to the endoplasmic reticulum membrane. It carries out the reaction CDP-ethanolamine + a 1,2-diacyl-sn-glycerol = a 1,2-diacyl-sn-glycero-3-phosphoethanolamine + CMP + H(+). It catalyses the reaction 1-O-alkyl-2-acyl-sn-glycerol + CDP-ethanolamine = a 1-O-alkyl-2-acyl-sn-glycero-3-phosphoethanolamine + CMP + H(+). The protein operates within phospholipid metabolism; phosphatidylethanolamine biosynthesis; phosphatidylethanolamine from ethanolamine: step 3/3. Its function is as follows. Ethanolaminephosphotransferase that catalyzes the transfer of phosphoethanolamine (PE) from CDP-ethanolamine to lipid acceptors, the final step in the synthesis of PE via the 'Kennedy' pathway. PE is the second most abundant phospholipid of membranes in mammals and is involved in various membrane-related cellular processes. The enzyme is critical for the synthesis of several PE species and also catalyzes the synthesis of plasmanyl-PE, a lipid required for proper myelination and neurodevelopment, from 1-alkyl-2-acylglycerol. The polypeptide is Ethanolaminephosphotransferase 1 (Pongo abelii (Sumatran orangutan)).